The primary structure comprises 124 residues: Small ribosomal subunit protein uS12 (124 aa).

A disordered region spans residues 1-24 (MTTINQLVRKPRQATTYKSASPAL). At aspartate 89 the chain carries 3-methylthioaspartic acid.

This sequence belongs to the universal ribosomal protein uS12 family. In terms of assembly, part of the 30S ribosomal subunit. Contacts proteins S8 and S17. May interact with IF1 in the 30S initiation complex.

In terms of biological role, with S4 and S5 plays an important role in translational accuracy. Its function is as follows. Interacts with and stabilizes bases of the 16S rRNA that are involved in tRNA selection in the A site and with the mRNA backbone. Located at the interface of the 30S and 50S subunits, it traverses the body of the 30S subunit contacting proteins on the other side and probably holding the rRNA structure together. The combined cluster of proteins S8, S12 and S17 appears to hold together the shoulder and platform of the 30S subunit. This Xanthomonas axonopodis pv. citri (strain 306) protein is Small ribosomal subunit protein uS12.